The chain runs to 382 residues: Mannitol-1-phosphate 5-dehydrogenase (382 aa).

NAD(+) is bound at residue 4–15 (AVHFGAGNIGRG).

This sequence belongs to the mannitol dehydrogenase family.

The enzyme catalyses D-mannitol 1-phosphate + NAD(+) = beta-D-fructose 6-phosphate + NADH + H(+). The polypeptide is Mannitol-1-phosphate 5-dehydrogenase (Vibrio vulnificus (strain CMCP6)).